The chain runs to 229 residues: Uracil-DNA glycosylase (229 aa).

The active-site Proton acceptor is aspartate 70.

The protein belongs to the uracil-DNA glycosylase (UDG) superfamily. UNG family.

It localises to the cytoplasm. It catalyses the reaction Hydrolyzes single-stranded DNA or mismatched double-stranded DNA and polynucleotides, releasing free uracil.. Excises uracil residues from the DNA which can arise as a result of misincorporation of dUMP residues by DNA polymerase or due to deamination of cytosine. The protein is Uracil-DNA glycosylase of Chlamydia felis (strain Fe/C-56) (Chlamydophila felis).